A 212-amino-acid chain; its full sequence is MIGGKEKEVFAKIREHLNAVESTLMAFRKLFEVYIRGDVERAEELLKDVEREESRADELRRNIELMLYGGAFLPASRGDYVRLSELIDNVADAAESAAHSLMFAKPIVPKGLEDEIIRLVDESLKTFEYLKGATLALEDSVDDALMLAKKTETQEEDADKIEYDLLRKIFSREDISTYAKLIWNQVITKIGDVADRAEDASDQIMLIAIKRR.

This sequence belongs to the UPF0111 family.

This is UPF0111 protein PH1389 from Pyrococcus horikoshii (strain ATCC 700860 / DSM 12428 / JCM 9974 / NBRC 100139 / OT-3).